Consider the following 83-residue polypeptide: Cytochrome b559 subunit alpha (83 aa).

The chain crosses the membrane as a helical span at residues 21–35 (VIHSITIPSLFIAGW). Histidine 23 provides a ligand contact to heme.

The protein belongs to the PsbE/PsbF family. Heterodimer of an alpha subunit and a beta subunit. PSII is composed of 1 copy each of membrane proteins PsbA, PsbB, PsbC, PsbD, PsbE, PsbF, PsbH, PsbI, PsbJ, PsbK, PsbL, PsbM, PsbT, PsbX, PsbY, PsbZ, Psb30/Ycf12, at least 3 peripheral proteins of the oxygen-evolving complex and a large number of cofactors. It forms dimeric complexes. Requires heme b as cofactor.

The protein resides in the plastid. It localises to the chloroplast thylakoid membrane. Its function is as follows. This b-type cytochrome is tightly associated with the reaction center of photosystem II (PSII). PSII is a light-driven water:plastoquinone oxidoreductase that uses light energy to abstract electrons from H(2)O, generating O(2) and a proton gradient subsequently used for ATP formation. It consists of a core antenna complex that captures photons, and an electron transfer chain that converts photonic excitation into a charge separation. This is Cytochrome b559 subunit alpha from Piper cenocladum (Ant piper).